A 490-amino-acid polypeptide reads, in one-letter code: Cytochrome P450 2C26 (490 aa).

Residue Cys-435 participates in heme binding.

It belongs to the cytochrome P450 family. The cofactor is heme.

Its subcellular location is the endoplasmic reticulum membrane. It is found in the microsome membrane. It catalyses the reaction an organic molecule + reduced [NADPH--hemoprotein reductase] + O2 = an alcohol + oxidized [NADPH--hemoprotein reductase] + H2O + H(+). In terms of biological role, catalyzes the hydroxylation of tolbutamide and the N-demethylation of aminopyrine and benzphetamine. The chain is Cytochrome P450 2C26 (CYP2C26) from Mesocricetus auratus (Golden hamster).